Here is a 374-residue protein sequence, read N- to C-terminus: Cyclin-D (374 aa).

Belongs to the cyclin family. Cyclin D subfamily.

The chain is Cyclin-D (CycD) from Ostreococcus tauri.